The sequence spans 465 residues: Ribulose bisphosphate carboxylase large chain (465 aa).

N6,N6,N6-trimethyllysine is present on Lys-4. Substrate-binding residues include Asn-113 and Thr-163. Catalysis depends on Lys-165, which acts as the Proton acceptor. Residue Lys-167 participates in substrate binding. Positions 191, 193, and 194 each coordinate Mg(2+). Lys-191 is modified (N6-carboxylysine). His-284 acts as the Proton acceptor in catalysis. The substrate site is built by Arg-285, His-317, and Ser-369.

Belongs to the RuBisCO large chain family. Type I subfamily. In terms of assembly, heterohexadecamer of 8 large chains and 8 small chains; disulfide-linked. The disulfide link is formed within the large subunit homodimers. Mg(2+) serves as cofactor. The disulfide bond which can form in the large chain dimeric partners within the hexadecamer appears to be associated with oxidative stress and protein turnover.

It is found in the plastid. The protein resides in the chloroplast. It carries out the reaction 2 (2R)-3-phosphoglycerate + 2 H(+) = D-ribulose 1,5-bisphosphate + CO2 + H2O. The enzyme catalyses D-ribulose 1,5-bisphosphate + O2 = 2-phosphoglycolate + (2R)-3-phosphoglycerate + 2 H(+). In terms of biological role, ruBisCO catalyzes two reactions: the carboxylation of D-ribulose 1,5-bisphosphate, the primary event in carbon dioxide fixation, as well as the oxidative fragmentation of the pentose substrate in the photorespiration process. Both reactions occur simultaneously and in competition at the same active site. The sequence is that of Ribulose bisphosphate carboxylase large chain from Passiflora quadrangularis (Grenadine).